A 177-amino-acid chain; its full sequence is Basic form of pathogenesis-related protein 1 (177 aa).

The signal sequence occupies residues 1–23; that stretch reads MGFLTTIVACFITFAILIHSSKA. Gln-24 carries the pyrrolidone carboxylic acid modification. Positions 31–147 constitute an SCP domain; it reads LNPHNAARRQ…NGWFFITCNY (117 aa).

This sequence belongs to the CRISP family. Post-translationally, two disulfide bonds are present.

Its function is as follows. Probably involved in the defense reaction of plants against pathogens. In Nicotiana tabacum (Common tobacco), this protein is Basic form of pathogenesis-related protein 1.